A 463-amino-acid chain; its full sequence is MGKEKIHINIVVIGHVDSGKSTTTGHLIYKCGGIDKRTIEKFEKEAQEMGKGSFKYAWVLDKLKAERERGITIDIALWKFETAKYYVTIIDAPGHRDFIKNMITGTSQADCAVLIVAAGTGEFEAGISKNGQTREHALLAFTLGVKQLIVGVNKMDSSEPPYSEARYEEIKKEVSSYIKKIGYNPAAVAFVPISGWHGDNMLEPSTNMPWFKGWKVERKEGNADGKTLIDALDAILPPARPTDKALRLPLQDVYKIGGIGTVPVGRVETGVLKPGTVVVFAPANITTEVKSVEMHHEALQEAVPGDNVGFNVKNVSVKELRRGYVAGDSKANPPKGAADFTAQVIVLNHPGQIANGYTPVLDCHTAHIACKFAEIKEKVDRRSGKTTEENPKFIKSGDAAIVNLVPSKPLCVEAFQEFPPLGRFAVRDMRQTVAVGVIKAVNFKDASGGKVTKAAEKATKGKK.

The tr-type G domain maps to 5-242 (KIHINIVVIG…DAILPPARPT (238 aa)). The tract at residues 14–21 (GHVDSGKS) is G1. 14–21 (GHVDSGKS) is a binding site for GTP. Positions 70 to 74 (GITID) are G2. The tract at residues 91–94 (DAPG) is G3. GTP-binding positions include 91–95 (DAPGH) and 153–156 (NKMD). The interval 153–156 (NKMD) is G4. The segment at 194–196 (SGW) is G5. E301 and E374 each carry 5-glutamyl glycerylphosphorylethanolamine.

It belongs to the TRAFAC class translation factor GTPase superfamily. Classic translation factor GTPase family. EF-Tu/EF-1A subfamily.

Its subcellular location is the cytoplasm. Its function is as follows. This protein promotes the GTP-dependent binding of aminoacyl-tRNA to the A-site of ribosomes during protein biosynthesis. The protein is Elongation factor 1-alpha 1 of Drosophila melanogaster (Fruit fly).